Consider the following 104-residue polypeptide: L-rhamnose mutarotase (104 aa).

Y18 contacts substrate. H22 serves as the catalytic Proton donor. Residues Y41 and 76 to 77 (WW) contribute to the substrate site. The tract at residues 85 to 104 (PSNPDNSPISDALDPVFYLD) is disordered.

Belongs to the rhamnose mutarotase family. As to quaternary structure, homodimer.

It localises to the cytoplasm. It carries out the reaction alpha-L-rhamnose = beta-L-rhamnose. Its pathway is carbohydrate metabolism; L-rhamnose metabolism. Involved in the anomeric conversion of L-rhamnose. This chain is L-rhamnose mutarotase, found in Pectobacterium atrosepticum (strain SCRI 1043 / ATCC BAA-672) (Erwinia carotovora subsp. atroseptica).